Reading from the N-terminus, the 234-residue chain is Glucosamine-6-phosphate deaminase (234 aa).

Catalysis depends on Asp62, which acts as the Proton acceptor; for enolization step. Catalysis depends on Asn128, which acts as the For ring-opening step. His130 (proton acceptor; for ring-opening step) is an active-site residue. Glu135 functions as the For ring-opening step in the catalytic mechanism.

Belongs to the glucosamine/galactosamine-6-phosphate isomerase family. NagB subfamily.

It carries out the reaction alpha-D-glucosamine 6-phosphate + H2O = beta-D-fructose 6-phosphate + NH4(+). It participates in amino-sugar metabolism; N-acetylneuraminate degradation; D-fructose 6-phosphate from N-acetylneuraminate: step 5/5. Its function is as follows. Catalyzes the reversible isomerization-deamination of glucosamine 6-phosphate (GlcN6P) to form fructose 6-phosphate (Fru6P) and ammonium ion. This is Glucosamine-6-phosphate deaminase from Streptococcus equi subsp. equi (strain 4047).